An 86-amino-acid polypeptide reads, in one-letter code: Serine protease inhibitor Kazal-type 2 (86 aa).

The N-terminal stretch at 1 to 16 (MLRLVLLLLVTDFAAS) is a signal peptide. Residues 32-86 (QFRTPDCGHFDFPACPRNLNPVCGTDMNTYSNECTLCMKIREDGSHINIIKDEPC) enclose the Kazal-like domain. 3 cysteine pairs are disulfide-bonded: Cys38/Cys68, Cys46/Cys65, and Cys54/Cys86.

Expressed in sperm (at protein level). Expressed in testis but not in ovary, brain, heart, kidney or lung. Within testis, expressed in epididymis and germ cells.

Its subcellular location is the secreted. The protein resides in the cytoplasmic vesicle. It localises to the secretory vesicle. The protein localises to the acrosome. As a strong inhibitor of acrosin, it is required for normal spermiogenesis. It probably hinders premature activation of proacrosin and other proteases, thus preventing the cascade of events leading to spermiogenesis defects. May be involved in the regulation of serine protease-dependent germ cell apoptosis. It also inhibits trypsin. The sequence is that of Serine protease inhibitor Kazal-type 2 (Spink2) from Mus musculus (Mouse).